Here is a 336-residue protein sequence, read N- to C-terminus: MCINPADEQDYESYSLRMTAHLIESSSVTSFTATRLNQTTFRLVEDDRHIERPMVYVKLYATCVVVIDTGCNSPRNTELPVTSLRRFIETVPLDQNESMPLNPDGRLPYYILLSHCHYDHIGGLESFQGSPYHIYCSQRLSETIANSRLHHDSLRESCSLPPLELDLEKMTGVPDGYSLVDANSVELNLQLLHAPGHSPDHMVVLDLDESTIFLGDSAYEQSPLFYAYGGDLTLHIQTLARLETLLTTYETCEGAPIWTAACGHFSSGLNAVSLLQRTKTFILDVIEGKVPSRSQEANPYQSGGVLEFFTRDELAMACPDHLLKDARGSSISLCSS.

The segment at residues 32–100 (TATRLNQTTF…VPLDQNESMP (69 aa)) is a DNA-binding region (WRKY).

It is found in the nucleus. It participates in secondary metabolite biosynthesis. In terms of biological role, putative transcription factor; part of the cluster that mediates the biosynthesis of a highly modified cyclo-arginine-tryptophan dipeptide (cRW). This Aspergillus versicolor protein is Putative transcription factor avaE.